The sequence spans 251 residues: PF03932 family protein CutC (251 aa).

Belongs to the CutC family.

It localises to the cytoplasm. The protein is PF03932 family protein CutC of Erwinia tasmaniensis (strain DSM 17950 / CFBP 7177 / CIP 109463 / NCPPB 4357 / Et1/99).